Here is a 151-residue protein sequence, read N- to C-terminus: Small ribosomal subunit protein bS6 (151 aa).

The tract at residues 96-151 (HEEGQSAMLTRRDDRRERDGDDRPRRREGGFDRGDRGDRGDRGPRRPRDNEAGEGA) is disordered.

It belongs to the bacterial ribosomal protein bS6 family.

In terms of biological role, binds together with bS18 to 16S ribosomal RNA. The sequence is that of Small ribosomal subunit protein bS6 from Brucella anthropi (strain ATCC 49188 / DSM 6882 / CCUG 24695 / JCM 21032 / LMG 3331 / NBRC 15819 / NCTC 12168 / Alc 37) (Ochrobactrum anthropi).